The sequence spans 1273 residues: MGYHNVKYGKKAQRRNYSKTIYDVDLPNLIEIQNQSFDWFLKHGIKELLQDFCPIESYNGDLKIHFDDYFLAPPKYSIEETKIKDISYVAQLFVKTTLENVLTGETKQSNILLTELPLMTPTGTFVINGTERVVVSQIVRSASVYFAGNFDSKLNRTTYSGQVIPSRGAWIEYEEGSKEILYAKLDRSKKIPLSNFIYALGFDSKEAIENVFGKSAIIDSVFDKETDMDSDNALVELYSKIRQGEKVPVDTARDFIRTRLFDQKKYDLAKVGRYKFNKKLDVLTRAENTYLACDFVNPETQEIIIAQDELLTKEKIAILKQNRHFLLQEIFDAKHNLENETDEEILAYKKDPQKNELFTKTNIINSRTGEVLVAKDTLVNDDIINHLRHNIHTLDEKVSKFFLGTKDIYQKEADRQGVFNEILEVYTSKDESGKLYHKVKLIGNDQRETKKHITLSDVIASINYYLNLYENVGTVDDIDHLGNRRLRLIGELLKNQFRIGLTRAEKNIKDMISTSKFSEVNGPGDLVNFTFLMSVIKTFFTSSRLSQFMDQINPLAELTQKRRVSALGIGGINRDRAGIEVRDVHNSHYGRLCPIETPEGPSIGLITSLSTYAKVNKYGFIQTPFFKVLHQDGKTTLSRHIDYLTADQEKEEIIASAGFVLDANNAFKDKKIIARSNGETGIFERSQITYADVSPKQIVSVATSSIPFLEHNDASRALMGANMQRQAVPLLIPESPIVGTGVEYRAAKDSGCLIIARESGFVTYVDAQKIIITKKPNQNVSLNGKTLYDTTQEFTYAQAKALYENNYKEHQAEYTLINFAKSNQDTLVLQKPIVVLGEQINEGDILVSGPSTSQGELALGRNVTVAFMTWEGYNYEDAIIMSEELVKHDVYTSIHIDKYEVQTRELKKGSGQEEITREVPNVGADAIKNLDERGIIIPGSEVKEGDILVGKITPQGNIEPSPSEKLIQIVIGEKAREYKDSSLRVPFGEGGIVQSVHYFSRKNGDVLPAGVNENIRVFIAKKRKINEGDKMAGRHGNKGVISRILPKEDLPYMADGTPIDIMLNPLGVPSRMNIGQILEIHLGMAAKKLGIKVATPVFDGVNDYDLKEIMKEANLDPDGKMVLYDGRTGEPYDSRISVGVMYMVKLSHMVDDKLHARNVGPYTLVTQQPMGGKVQNGGQRFGEMEVWALYAYGAAHTLQEILTVKSDDIVGRNKTYSAIVQGTPLPKPSIPESFRVFIKELQSLGLYVELIKTDTKENEVNKSLIDYKKEGYN.

This sequence belongs to the RNA polymerase beta chain family. In terms of assembly, the RNAP catalytic core consists of 2 alpha, 1 beta, 1 beta' and 1 omega subunit. When a sigma factor is associated with the core the holoenzyme is formed, which can initiate transcription.

The enzyme catalyses RNA(n) + a ribonucleoside 5'-triphosphate = RNA(n+1) + diphosphate. In terms of biological role, DNA-dependent RNA polymerase catalyzes the transcription of DNA into RNA using the four ribonucleoside triphosphates as substrates. The protein is DNA-directed RNA polymerase subunit beta of Onion yellows phytoplasma (strain OY-M).